The sequence spans 561 residues: (+)-alpha-pinene synthase TPS2FN (561 aa).

(2E)-geranyl diphosphate is bound by residues R276, D313, D317, R455, and D458. Mg(2+) is bound by residues D313 and D317. The DDXXD motif motif lies at 313–317 (DDIYD). Mg(2+) is bound by residues D458, T462, and E466.

Belongs to the terpene synthase family. Tpsb subfamily. The cofactor is Mg(2+). Mn(2+) is required as a cofactor. In terms of tissue distribution, expressed in glandular trichomes two to four weeks after flowering onset.

The catalysed reaction is (2E)-geranyl diphosphate = (1R,5R)-alpha-pinene + diphosphate. It catalyses the reaction (2E)-geranyl diphosphate = (4S)-limonene + diphosphate. The enzyme catalyses (2E)-geranyl diphosphate = sabinene + diphosphate. It carries out the reaction (2E)-geranyl diphosphate = beta-phellandrene + diphosphate. The catalysed reaction is (2E)-geranyl diphosphate = camphene + diphosphate. It catalyses the reaction (2E)-geranyl diphosphate = isoterpinolene + diphosphate. The protein operates within secondary metabolite biosynthesis; terpenoid biosynthesis. Its pathway is terpene metabolism; (-)-alpha-pinene biosynthesis; (-)-alpha-pinene from geranyl diphosphate: step 1/1. In terms of biological role, involved in monoterpene (C10) olefins biosynthesis, constituants of cannabinoids and terpenoids-rich resins. Catalyzes mainly the conversion of (2E)-geranyl diphosphate to (+)-alpha-pinene, and also produces minor products such as camphene, sabinene, beta-phellandrene, (-)-limonene and isoterpinolene. The chain is (+)-alpha-pinene synthase TPS2FN from Cannabis sativa (Hemp).